Here is a 220-residue protein sequence, read N- to C-terminus: Inner membrane-spanning protein YciB (220 aa).

The next 6 helical transmembrane spans lie at 20–40 (EVPPLLKLALELGPLLVFFFA), 57–77 (IGAPIFLATALFMGATVIALA), 86–106 (LPIMPLVSGIVVLVFGALTLW), 123–143 (LFGAILLGGLFFGKSLLGYVF), 156–176 (KLTLRWGLFFIFLAVVNEVVW), and 187–207 (FKVWGIMPITIVFTLLQMPLI).

This sequence belongs to the YciB family.

It is found in the cell inner membrane. In terms of biological role, plays a role in cell envelope biogenesis, maintenance of cell envelope integrity and membrane homeostasis. The chain is Inner membrane-spanning protein YciB from Brucella anthropi (strain ATCC 49188 / DSM 6882 / CCUG 24695 / JCM 21032 / LMG 3331 / NBRC 15819 / NCTC 12168 / Alc 37) (Ochrobactrum anthropi).